The primary structure comprises 295 residues: Proline-rich protein 32 (295 aa).

Disordered stretches follow at residues G10–G48 and A101–D120.

The protein is Proline-rich protein 32 (PRR32) of Bos taurus (Bovine).